Consider the following 234-residue polypeptide: Probable Ufm1-specific protease 1 (234 aa).

Catalysis depends on residues Cys70, Asp194, and His196.

The protein belongs to the peptidase C78 family.

Its function is as follows. Thiol protease which recognizes and hydrolyzes the peptide bond at the C-terminal Gly of UFM1, a ubiquitin-like modifier protein bound to a number of target proteins. This Drosophila melanogaster (Fruit fly) protein is Probable Ufm1-specific protease 1.